The sequence spans 322 residues: 4-diphosphocytidyl-2-C-methyl-D-erythritol kinase (322 aa).

Residue lysine 27 is part of the active site. Position 112–122 (112–122 (PVAGGMAGGSA)) interacts with ATP. Aspartate 154 is an active-site residue.

It belongs to the GHMP kinase family. IspE subfamily.

It catalyses the reaction 4-CDP-2-C-methyl-D-erythritol + ATP = 4-CDP-2-C-methyl-D-erythritol 2-phosphate + ADP + H(+). The protein operates within isoprenoid biosynthesis; isopentenyl diphosphate biosynthesis via DXP pathway; isopentenyl diphosphate from 1-deoxy-D-xylulose 5-phosphate: step 3/6. Catalyzes the phosphorylation of the position 2 hydroxy group of 4-diphosphocytidyl-2C-methyl-D-erythritol. This Mycolicibacterium smegmatis (strain ATCC 700084 / mc(2)155) (Mycobacterium smegmatis) protein is 4-diphosphocytidyl-2-C-methyl-D-erythritol kinase.